The sequence spans 204 residues: UPF0637 protein lwe1043 (204 aa).

It belongs to the UPF0637 family.

The protein is UPF0637 protein lwe1043 of Listeria welshimeri serovar 6b (strain ATCC 35897 / DSM 20650 / CCUG 15529 / CIP 8149 / NCTC 11857 / SLCC 5334 / V8).